A 430-amino-acid chain; its full sequence is Ribosomal protein uS12 methylthiotransferase RimO (430 aa).

The MTTase N-terminal domain maps to 4 to 119 (LKINFISLGC…IPVLFDIKPK (116 aa)). C13, C49, C82, C141, C145, and C148 together coordinate [4Fe-4S] cluster. The 232-residue stretch at 127 to 358 (STPKHTAYLK…SALQENITEQ (232 aa)) folds into the Radical SAM core domain. The 70-residue stretch at 361–430 (KSLIGKELDI…DKYDVVGEAE (70 aa)) folds into the TRAM domain.

It belongs to the methylthiotransferase family. RimO subfamily. [4Fe-4S] cluster serves as cofactor.

It is found in the cytoplasm. The catalysed reaction is L-aspartate(89)-[ribosomal protein uS12]-hydrogen + (sulfur carrier)-SH + AH2 + 2 S-adenosyl-L-methionine = 3-methylsulfanyl-L-aspartate(89)-[ribosomal protein uS12]-hydrogen + (sulfur carrier)-H + 5'-deoxyadenosine + L-methionine + A + S-adenosyl-L-homocysteine + 2 H(+). Catalyzes the methylthiolation of an aspartic acid residue of ribosomal protein uS12. The protein is Ribosomal protein uS12 methylthiotransferase RimO of Sulfurihydrogenibium sp. (strain YO3AOP1).